The primary structure comprises 201 residues: Reticulon-like protein B10 (201 aa).

The Reticulon domain occupies 14–201 (VADLIMWKNR…KPTNKIKKMQ (188 aa)). 3 helical membrane passes run 25–45 (GGFL…KCGY), 46–66 (SFFP…FLWA), and 135–155 (FLNF…IPFL).

The protein resides in the endoplasmic reticulum membrane. This is Reticulon-like protein B10 (RTNLB10) from Arabidopsis thaliana (Mouse-ear cress).